The chain runs to 208 residues: Small ribosomal subunit protein uS4A (208 aa).

The region spanning 98 to 159 (SRLDNVAYNM…HAKSYLRIKA (62 aa)) is the S4 RNA-binding domain.

It belongs to the universal ribosomal protein uS4 family. Part of the 30S ribosomal subunit. Contacts protein S5. The interaction surface between S4 and S5 is involved in control of translational fidelity.

In terms of biological role, one of the primary rRNA binding proteins, it binds directly to 16S rRNA where it nucleates assembly of the body of the 30S subunit. Its function is as follows. With S5 and S12 plays an important role in translational accuracy. The sequence is that of Small ribosomal subunit protein uS4A (rpsD1) from Nitrosomonas europaea (strain ATCC 19718 / CIP 103999 / KCTC 2705 / NBRC 14298).